A 103-amino-acid polypeptide reads, in one-letter code: Phosphoribosyl-ATP pyrophosphatase (103 aa).

Residues 79–103 (SVQAELERREGKLSTTRDRKEIDEL) are disordered. Basic and acidic residues predominate over residues 83–103 (ELERREGKLSTTRDRKEIDEL).

The protein belongs to the PRA-PH family.

It is found in the cytoplasm. It carries out the reaction 1-(5-phospho-beta-D-ribosyl)-ATP + H2O = 1-(5-phospho-beta-D-ribosyl)-5'-AMP + diphosphate + H(+). It functions in the pathway amino-acid biosynthesis; L-histidine biosynthesis; L-histidine from 5-phospho-alpha-D-ribose 1-diphosphate: step 2/9. The protein is Phosphoribosyl-ATP pyrophosphatase of Listeria welshimeri serovar 6b (strain ATCC 35897 / DSM 20650 / CCUG 15529 / CIP 8149 / NCTC 11857 / SLCC 5334 / V8).